Reading from the N-terminus, the 850-residue chain is Lon protease (850 aa).

Positions 38–232 constitute a Lon N-terminal domain; sequence LPVLPLRDVV…LLVGLVDGEI (195 aa). 384-391 serves as a coordination point for ATP; that stretch reads GPPGVGKT. Residues 634 to 815 enclose the Lon proteolytic domain; the sequence is ENEIGLVTGL…DEVLDLALER (182 aa). Residues serine 721 and lysine 764 contribute to the active site. The interval 819-850 is disordered; the sequence is PKKAGKEKARKTAPRVAVRGKSRSTPGTRVKH. The span at 821-840 shows a compositional bias: basic residues; it reads KAGKEKARKTAPRVAVRGKS. Polar residues predominate over residues 841–850; the sequence is RSTPGTRVKH.

This sequence belongs to the peptidase S16 family. In terms of assembly, homohexamer. Organized in a ring with a central cavity.

It is found in the cytoplasm. The enzyme catalyses Hydrolysis of proteins in presence of ATP.. In terms of biological role, ATP-dependent serine protease that mediates the selective degradation of mutant and abnormal proteins as well as certain short-lived regulatory proteins. Required for cellular homeostasis and for survival from DNA damage and developmental changes induced by stress. Degrades polypeptides processively to yield small peptide fragments that are 5 to 10 amino acids long. Binds to DNA in a double-stranded, site-specific manner. This Xanthomonas oryzae pv. oryzae (strain KACC10331 / KXO85) protein is Lon protease.